Here is a 116-residue protein sequence, read N- to C-terminus: MRFFSYLGLLLAGLASLASLAGLVSLANLQDFSTDNPLEEELRCWCQYVKNCRFCWACQDGFCKNKVLKNMPSVQEHSYPMEHCMLHRQCKYIRDGPIFQVECTMQTCDAIRLLNV.

Residues 1–19 form the signal peptide; that stretch reads MRFFSYLGLLLAGLASLAS.

Belongs to the asfivirus MGF 110 family.

Plays a role in virus cell tropism, and may be required for efficient virus replication in macrophages. The chain is Protein MGF 110-2L from Ornithodoros (relapsing fever ticks).